The sequence spans 734 residues: MALRFPRFSQGLAQDPTTRRIWFGIATAHDFESHDDITEERLYQNIFASHFGQLAIIFLWTSGNLFHVAWQGNFETWVQDPLHVRPIAHAIWDPHFGQPAVEAFTRGGALGPVNIAYSGVYQWWYTIGLRTNEDLYTGALFLLFLSALSLIGGWLHLQPKWKPRVSWFKNAESRLNHHLSGLFGVSSLAWTGHLVHVAIPASRGESVRWNNFLNVLPHPQGLGPLFTGQWNLYAQNPDSSSHLFGTSQGSGTAILTLLGGFHPQTQSLWLTDMAHHHLAIAILFLIAGHMYRTNFGIGHSIKDLLEAHIPPGGRLGRGHKGLYDTINNSIHFQLGLALASLGVITSLVAQHMYSLPAYAFIAQDFTTQAALYTHHQYIAGFIMTGAFAHGAIFFIRDYNPEQNEDNVLARMLDHKEAIISHLSWASLFLGFHTLGLYVHNDVMLAFGTPEKQILIEPIFAQWIQSAHGKTSYGFDVLLSSTSGPAFNAGRSIWLPGWLNAINENSNSLFLTIGPGDFLVHHAIALGLHTTTLILVKGALDARGSKLMPDKKDFGYSFPCDGPGRGGTCDISAWDAFYLAVFWMLNTIGWVTFYWHWKHITLWQGNVSQFNESSTYLMGWLRDYLWLNSSQLINGYNPFGMNSLSVWAWMFLFGHLVWATGFMFLISWRGYWQELIETLAWAHERTPLANLIRWKDKPVALSIVQARLVGLAHFSVGYIFTYAAFLIASTSGKFG.

A run of 8 helical transmembrane segments spans residues 46–69 (IFAS…FHVA), 135–158 (LYTG…LHLQ), 175–199 (LNHH…HVAI), 273–291 (MAHH…GHMY), 330–353 (IHFQ…QHMY), 369–395 (AALY…IFFI), 417–439 (AIIS…LYVH), and 517–535 (FLVH…LILV). [4Fe-4S] cluster contacts are provided by Cys-559 and Cys-568. 2 consecutive transmembrane segments (helical) span residues 575-596 (AFYL…YWHW) and 643-665 (LSVW…MFLI). 3 residues coordinate chlorophyll a: His-654, Met-662, and Tyr-670. Trp-671 lines the phylloquinone pocket. Residues 707-727 (LVGLAHFSVGYIFTYAAFLIA) traverse the membrane as a helical segment.

This sequence belongs to the PsaA/PsaB family. In terms of assembly, the PsaA/B heterodimer binds the P700 chlorophyll special pair and subsequent electron acceptors. PSI consists of a core antenna complex that captures photons, and an electron transfer chain that converts photonic excitation into a charge separation. The eukaryotic PSI reaction center is composed of at least 11 subunits. P700 is a chlorophyll a/chlorophyll a' dimer, A0 is one or more chlorophyll a, A1 is one or both phylloquinones and FX is a shared 4Fe-4S iron-sulfur center. is required as a cofactor.

Its subcellular location is the plastid. It localises to the chloroplast thylakoid membrane. The catalysed reaction is reduced [plastocyanin] + hnu + oxidized [2Fe-2S]-[ferredoxin] = oxidized [plastocyanin] + reduced [2Fe-2S]-[ferredoxin]. In terms of biological role, psaA and PsaB bind P700, the primary electron donor of photosystem I (PSI), as well as the electron acceptors A0, A1 and FX. PSI is a plastocyanin-ferredoxin oxidoreductase, converting photonic excitation into a charge separation, which transfers an electron from the donor P700 chlorophyll pair to the spectroscopically characterized acceptors A0, A1, FX, FA and FB in turn. Oxidized P700 is reduced on the lumenal side of the thylakoid membrane by plastocyanin. This chain is Photosystem I P700 chlorophyll a apoprotein A2, found in Crucihimalaya wallichii (Rock-cress).